The chain runs to 267 residues: Chaperone protein MyfB (267 aa).

The N-terminal stretch at 1 to 34 (MKYKFSHNFISYNLFLFVFMSLILLPYSHASSMG) is a signal peptide. The cysteines at positions 127 and 164 are disulfide-linked.

This sequence belongs to the periplasmic pilus chaperone family.

It localises to the periplasm. Its function is as follows. Required for the biogenesis of the MyfA fimbria. This Yersinia enterocolitica protein is Chaperone protein MyfB (myfB).